A 301-amino-acid polypeptide reads, in one-letter code: Aldose reductase (301 aa).

11-20 is an NADP(+) binding site; the sequence is GKEIPTVGLG. Tyr-51 functions as the Proton donor in the catalytic mechanism. A substrate-binding site is contributed by His-111. Position 209–266 (209–266) interacts with NADP(+); it reads SSLGSAPGSSAKVRDDKTIKAIAKKYGCAPSQIILSYITAQGICVIPKSRSKEHLREN.

It belongs to the aldo/keto reductase family.

It is found in the cytoplasm. It carries out the reaction an alditol + NAD(+) = an aldose + NADH + H(+). The catalysed reaction is an alditol + NADP(+) = an aldose + NADPH + H(+). Its function is as follows. Catalyzes the NADPH-dependent reduction of a wide variety of carbonyl-containing compounds to their corresponding alcohols with a broad range of catalytic efficiencies. The sequence is that of Aldose reductase from Encephalitozoon cuniculi (strain GB-M1) (Microsporidian parasite).